A 142-amino-acid chain; its full sequence is ATP synthase epsilon chain (142 aa).

This sequence belongs to the ATPase epsilon chain family. F-type ATPases have 2 components, CF(1) - the catalytic core - and CF(0) - the membrane proton channel. CF(1) has five subunits: alpha(3), beta(3), gamma(1), delta(1), epsilon(1). CF(0) has three main subunits: a, b and c.

It localises to the cell inner membrane. Functionally, produces ATP from ADP in the presence of a proton gradient across the membrane. This chain is ATP synthase epsilon chain, found in Shewanella woodyi (strain ATCC 51908 / MS32).